Consider the following 482-residue polypeptide: Type II methyltransferase M.AvaI (482 aa).

It belongs to the N(4)/N(6)-methyltransferase family. N(4) subfamily.

The enzyme catalyses a 2'-deoxycytidine in DNA + S-adenosyl-L-methionine = an N(4)-methyl-2'-deoxycytidine in DNA + S-adenosyl-L-homocysteine + H(+). In terms of biological role, an alpha subtype methylase that recognizes the double-stranded sequence 5'-CYCGRG-3', methylates C-1 on both strands, and protects the DNA from cleavage by the AvaI endonuclease. The polypeptide is Type II methyltransferase M.AvaI (Anabaena variabilis).